The chain runs to 317 residues: Transcription factor EC (317 aa).

Positions 1–90 are necessary for transcriptional transactivation; sequence MTFDCRVCDQ…GLTDAPCPSI (90 aa). One can recognise a bHLH domain in the interval 110 to 163; the sequence is QKKDNHNLIERRRRYNINYRIKELGTLIPKSNDPDMRWNKGTILKASVDYIKWL. The tract at residues 242–317 is necessary for transcriptional transactivation; that stretch reads TSPEFYEQAV…SLSSEDGDEL (76 aa).

It belongs to the MiT/TFE family. Homodimer. Forms heterodimers with MITF. Interacts with MITF. Forms heterodimers with TFE3. In terms of tissue distribution, expressed in osteoclast-like cells (at protein level). Expressed in cells of the mononuclear phagocyte lineage. Expressed in macrophages and in osteoclast-like cells.

The protein localises to the nucleus. Transcriptional regulator that acts as a repressor or an activator. Acts as a transcriptional transactivator on the proximal promoter region of the tartrate-resistant acid phosphatase (TRAP) E-box containing promoter. Collaborates with MITF in target gene activation. Acts as a transcriptional repressor on minimal promoter containing element F (that includes an E-box sequence). Binds to element F in an E-box sequence-specific manner. Acts as a transcriptional repressor on minimal promoter containing mu E3 enhancer sequence. Binds to mu E3 DNA sequence of the immunoglobulin heavy-chain gene enhancer. Binds DNA in a homo- or heterodimeric form. The protein is Transcription factor EC (Tfec) of Mus musculus (Mouse).